A 24-amino-acid chain; its full sequence is Brevinin-1La (24 aa).

Cys-18 and Cys-24 form a disulfide bridge.

In terms of tissue distribution, expressed by the skin glands.

The protein resides in the secreted. In terms of biological role, antibacterial activity against Gram-positive bacterium S.aureus and Gram-negative bacterium E.coli. The polypeptide is Brevinin-1La (Rana luteiventris (Columbia spotted frog)).